The primary structure comprises 1035 residues: Cell-division control histidine kinase PdhS (1035 aa).

The important for polar localization stretch occupies residues M1–D613. Positions Q500–E533 are disordered. Positions A614–D1035 are interaction with DivK. The region spanning H659–V730 is the PAS domain. Residues R802–R1031 enclose the Histidine kinase domain. Position 805 is a phosphohistidine; by autocatalysis (H805).

In terms of assembly, interacts with DivK.

The protein resides in the cytoplasm. It catalyses the reaction ATP + protein L-histidine = ADP + protein N-phospho-L-histidine.. In terms of biological role, functions as a polar differentiation marker. Essential protein that, by localizing in the old pole of dividing cells, controls cell division and maturation, probably through control of DivK phosphorylation status and cellular distribution, which in turn regulates CtrA, a transcriptional regulator of the minB operon. The asymmetrical localization of this protein is probably required for cells to enter a new division cycle. This is Cell-division control histidine kinase PdhS (pdhS) from Brucella melitensis biotype 1 (strain ATCC 23456 / CCUG 17765 / NCTC 10094 / 16M).